Reading from the N-terminus, the 70-residue chain is MAVEKINASSSLAEVVDRILDKGVVVDAWVRVSLVGIELLAVEARVVVAGVDTYLKYAEAVGLTASAQAA.

Belongs to the gas vesicle GvpA family. In terms of assembly, the gas vesicle shell is 2 nm thick and consists of a single layer of this protein. It forms helical ribs nearly perpendicular to the long axis of the vesicle.

The protein resides in the gas vesicle shell. Functionally, gas vesicles are hollow, gas filled proteinaceous nanostructures found in some microorganisms. During planktonic growth they allow positioning of the organism at a favorable depth for light or nutrient acquisition. GvpA forms the protein shell. This chain is Gas vesicle protein A, found in Ancylobacter aquaticus.